The sequence spans 115 residues: NADH-ubiquinone oxidoreductase chain 3 (115 aa).

Helical transmembrane passes span 4–24, 55–75, and 84–104; these read LLVIAVNTILSLILITVAFWL, FFLVAITFLLFDLEIALLLPI, and INMVLPTALILLTILALGLAY.

Belongs to the complex I subunit 3 family. As to quaternary structure, core subunit of respiratory chain NADH dehydrogenase (Complex I) which is composed of 45 different subunits. Interacts with TMEM186. Interacts with TMEM242.

The protein resides in the mitochondrion inner membrane. The catalysed reaction is a ubiquinone + NADH + 5 H(+)(in) = a ubiquinol + NAD(+) + 4 H(+)(out). Its function is as follows. Core subunit of the mitochondrial membrane respiratory chain NADH dehydrogenase (Complex I) which catalyzes electron transfer from NADH through the respiratory chain, using ubiquinone as an electron acceptor. Essential for the catalytic activity of complex I. This is NADH-ubiquinone oxidoreductase chain 3 from Ochrotomys nuttalli (Golden mouse).